Here is a 202-residue protein sequence, read N- to C-terminus: MWQERLAQLVTTCHWIGAKGWAPATGGNMSVRQDDTWCWLSESGRDKGSLTTEDFLQVEIATNQAPSGRKPSAETGLHTLVYRLFPEANVVLHVHTVNATVLSRIEKSDTLALQGYEMQKTLSGQHSHLDTVPVAIFDNDQDIDALAARIADYAQTRPLRYGFLLRGHGLTCWGKDIQEARRQLEGLEFLFECELMRRRYEP.

H93 and H95 together coordinate Zn(2+).

This sequence belongs to the aldolase class II family. MtnB subfamily. Zn(2+) serves as cofactor.

The enzyme catalyses 5-(methylsulfanyl)-D-ribulose 1-phosphate = 5-methylsulfanyl-2,3-dioxopentyl phosphate + H2O. The protein operates within amino-acid biosynthesis; L-methionine biosynthesis via salvage pathway; L-methionine from S-methyl-5-thio-alpha-D-ribose 1-phosphate: step 2/6. Catalyzes the dehydration of methylthioribulose-1-phosphate (MTRu-1-P) into 2,3-diketo-5-methylthiopentyl-1-phosphate (DK-MTP-1-P). The chain is Methylthioribulose-1-phosphate dehydratase from Klebsiella pneumoniae (strain 342).